We begin with the raw amino-acid sequence, 543 residues long: Germacrene A synthase (543 aa).

Residues D296, D300, D439, and E447 each coordinate Mg(2+). Residues 296 to 300 carry the DDXXD motif motif; it reads DDTYD.

It belongs to the terpene synthase family. Tpsa subfamily. It depends on Mg(2+) as a cofactor. Mn(2+) serves as cofactor. In terms of tissue distribution, barely detectable in leaves.

Its subcellular location is the plastid. It is found in the chloroplast. It catalyses the reaction (2E,6E)-farnesyl diphosphate = germacrene A + diphosphate. It carries out the reaction (2E,6E)-farnesyl diphosphate = (1S,2S,4R)-beta-elemene + diphosphate. Its pathway is secondary metabolite biosynthesis; terpenoid biosynthesis. In terms of biological role, sesquiterpene synthase involved in the biosynthesis of volatile compounds widely used in aromatherapy and folk medicine, and present in culinary herbs. Mediates the conversion of (2E,6E)-farnesyl diphosphate (FPP) into germacrene A and beta-elemene. Not able to use (2E)-geranyl diphosphate (GPP) as substrate. In Lavandula viridis (Green lavender), this protein is Germacrene A synthase.